Consider the following 366-residue polypeptide: Isocitrate dehydrogenase [NAD] subunit alpha, mitochondrial (366 aa).

The transit peptide at 1-27 directs the protein to the mitochondrion; that stretch reads MAGPAWISKVSRLLGAFHNPKQVTRGF. N6-succinyllysine is present on Lys-77. A Phosphothreonine modification is found at Thr-101. Substrate-binding residues include Arg-115, Arg-125, and Arg-146. Lys-223 is modified (N6-acetyllysine). The Mg(2+) site is built by Asp-233, Asp-257, and Asp-261. N6-acetyllysine; alternate is present on Lys-343. The residue at position 343 (Lys-343) is an N6-succinyllysine; alternate. Lys-350 carries the N6-succinyllysine modification.

The protein belongs to the isocitrate and isopropylmalate dehydrogenases family. In terms of assembly, heterooligomer of subunits alpha (IDH3A), beta (IDH3B), and gamma (IDH3G) in the apparent ratio of 2:1:1. The heterodimer containing one IDH3A and one IDH3B subunit and the heterodimer containing one IDH3A and one IDH3G subunit assemble into a heterotetramer (which contains two subunits of IDH3A, one of IDH3B and one of IDH3G) and further into the heterooctamer. Mg(2+) is required as a cofactor. Requires Mn(2+) as cofactor.

The protein resides in the mitochondrion. The catalysed reaction is D-threo-isocitrate + NAD(+) = 2-oxoglutarate + CO2 + NADH. The heterotetramer and the heterodimer composed of IDH3A and IDH3G subunits can be allosterically activated by citrate (CIT) or/and ADP, and the two activators can act independently or synergistically. The heterodimer composed of IDH3A and IDH3B subunits cannot be allosterically regulated and the allosteric regulation of the heterotetramer is through the IDH3G subunit and not the IDH3B subunit. The IDH3G subunit contains the allosteric site which consists of a CIT-binding site and an ADP-binding site, and the binding of CIT and ADP causes conformational changes at the allosteric site which are transmitted to the active site in the catalytic subunit (IDH3A) through a cascade of conformational changes at the heterodimer interface, leading to stabilization of the isocitrate-binding at the active site and thus activation of the enzyme. ATP can activate the heterotetramer and the heterodimer composed of IDH3A and IDH3G subunits at low concentrations but inhibits their activities at high concentrations, whereas ATP exhibits only inhibitory effect on the heterodimer composed of IDH3A and IDH3B subunits. Its function is as follows. Catalytic subunit of the enzyme which catalyzes the decarboxylation of isocitrate (ICT) into alpha-ketoglutarate. The heterodimer composed of the alpha (IDH3A) and beta (IDH3B) subunits and the heterodimer composed of the alpha (IDH3A) and gamma (IDH3G) subunits, have considerable basal activity but the full activity of the heterotetramer (containing two subunits of IDH3A, one of IDH3B and one of IDH3G) requires the assembly and cooperative function of both heterodimers. The sequence is that of Isocitrate dehydrogenase [NAD] subunit alpha, mitochondrial from Pongo abelii (Sumatran orangutan).